A 600-amino-acid polypeptide reads, in one-letter code: ATP-dependent RNA helicase DDX55 (600 aa).

The Q motif motif lies at tryptophan 9–serine 37. A Helicase ATP-binding domain is found at isoleucine 40–valine 223. ATP is bound at residue alanine 53 to threonine 60. The DEAD box motif lies at aspartate 171 to aspartate 174. Residues lysine 254–aspartate 402 form the Helicase C-terminal domain. Residues glutamate 500–arginine 513 are compositionally biased toward basic and acidic residues. The tract at residues glutamate 500–aspartate 550 is disordered. Over residues lysine 514 to lysine 537 the composition is skewed to basic residues. Positions lysine 533 to lysine 562 are important for nuclear localization. Residues serine 544 and serine 594 each carry the phosphoserine modification.

This sequence belongs to the DEAD box helicase family. DDX55/SPB4 subfamily. Interacts with 28S rRNA. Interacts with double-stranded RNA substrates in vitro; the interaction stimulates ATPase activity.

Its subcellular location is the nucleus. It localises to the nucleoplasm. The catalysed reaction is ATP + H2O = ADP + phosphate + H(+). Its function is as follows. Probable ATP-binding RNA helicase. Has ATPase activity and is involved in the maturation of precursor large subunit rRNAs. The sequence is that of ATP-dependent RNA helicase DDX55 from Homo sapiens (Human).